Here is a 143-residue protein sequence, read N- to C-terminus: Large ribosomal subunit protein uL11 (143 aa).

This sequence belongs to the universal ribosomal protein uL11 family. As to quaternary structure, part of the ribosomal stalk of the 50S ribosomal subunit. Interacts with L10 and the large rRNA to form the base of the stalk. L10 forms an elongated spine to which L12 dimers bind in a sequential fashion forming a multimeric L10(L12)X complex. Post-translationally, one or more lysine residues are methylated.

Its function is as follows. Forms part of the ribosomal stalk which helps the ribosome interact with GTP-bound translation factors. The protein is Large ribosomal subunit protein uL11 of Caulobacter vibrioides (strain ATCC 19089 / CIP 103742 / CB 15) (Caulobacter crescentus).